The chain runs to 332 residues: MKQVQTKRDWKKLAYDVVEEKMITKEDAIAILEADDTEVLEIMNAAYIIRHHHFGKKVKLNMIINTKSGLCPEDCGYCSQSIISEAPIDKYAWLTQEKIVEGAHEAIRRKAGTYCIVASGRRPTNKEVNHVIGAVKEIRETTDLKICCCLGFLNEDQAGQLAEAGVHRYNHNLNTHANNYDSICSTHTYDDRVDTVQKAKQAGISPCSGAIFGMGETIEQRAEIAFELQRLDADSIPCNFLVAVKGTPLEGQKELTPVECLKVLAMMRFVNPTKEIRISGGRELNLRSVQPLGLFAANSIFVGDYLTTAGQEPTADWGMIEDLGFEIEECAL.

Positions 53 to 282 (HFGKKVKLNM…TKEIRISGGR (230 aa)) constitute a Radical SAM core domain. [4Fe-4S] cluster is bound by residues cysteine 71, cysteine 75, and cysteine 78. Residues cysteine 115, cysteine 147, cysteine 207, and arginine 277 each contribute to the [2Fe-2S] cluster site.

Belongs to the radical SAM superfamily. Biotin synthase family. In terms of assembly, homodimer. Requires [4Fe-4S] cluster as cofactor. It depends on [2Fe-2S] cluster as a cofactor.

The enzyme catalyses (4R,5S)-dethiobiotin + (sulfur carrier)-SH + 2 reduced [2Fe-2S]-[ferredoxin] + 2 S-adenosyl-L-methionine = (sulfur carrier)-H + biotin + 2 5'-deoxyadenosine + 2 L-methionine + 2 oxidized [2Fe-2S]-[ferredoxin]. It participates in cofactor biosynthesis; biotin biosynthesis; biotin from 7,8-diaminononanoate: step 2/2. Functionally, catalyzes the conversion of dethiobiotin (DTB) to biotin by the insertion of a sulfur atom into dethiobiotin via a radical-based mechanism. The chain is Biotin synthase from Bacillus mycoides (strain KBAB4) (Bacillus weihenstephanensis).